The chain runs to 161 residues: ATP synthase subunit b (161 aa).

The helical transmembrane segment at 11–31 threads the bilayer; the sequence is AISFVLFVWFCMKYIWPPIIL.

Belongs to the ATPase B chain family. As to quaternary structure, F-type ATPases have 2 components, F(1) - the catalytic core - and F(0) - the membrane proton channel. F(1) has five subunits: alpha(3), beta(3), gamma(1), delta(1), epsilon(1). F(0) has three main subunits: a(1), b(2) and c(10-14). The alpha and beta chains form an alternating ring which encloses part of the gamma chain. F(1) is attached to F(0) by a central stalk formed by the gamma and epsilon chains, while a peripheral stalk is formed by the delta and b chains.

It localises to the cell membrane. In terms of biological role, f(1)F(0) ATP synthase produces ATP from ADP in the presence of a proton or sodium gradient. F-type ATPases consist of two structural domains, F(1) containing the extramembraneous catalytic core and F(0) containing the membrane proton channel, linked together by a central stalk and a peripheral stalk. During catalysis, ATP synthesis in the catalytic domain of F(1) is coupled via a rotary mechanism of the central stalk subunits to proton translocation. Functionally, component of the F(0) channel, it forms part of the peripheral stalk, linking F(1) to F(0). This is ATP synthase subunit b from Buchnera aphidicola subsp. Acyrthosiphon pisum (strain APS) (Acyrthosiphon pisum symbiotic bacterium).